A 508-amino-acid chain; its full sequence is Photosystem II CP47 reaction center protein (508 aa).

6 helical membrane-spanning segments follow: residues 21–36 (AVHIMHTALVSGWAGS), 101–115 (IVFSGLCFLAAIWHW), 140–156 (GIHLFLSGLACFGFGAF), 203–218 (IAAGTLGILAGLFHLS), 237–252 (VLSSSIAAVFFAAFVV), and 457–472 (SFALLFFFGHIWHGAR).

Belongs to the PsbB/PsbC family. PsbB subfamily. In terms of assembly, PSII is composed of 1 copy each of membrane proteins PsbA, PsbB, PsbC, PsbD, PsbE, PsbF, PsbH, PsbI, PsbJ, PsbK, PsbL, PsbM, PsbT, PsbX, PsbY, PsbZ, Psb30/Ycf12, at least 3 peripheral proteins of the oxygen-evolving complex and a large number of cofactors. It forms dimeric complexes. Binds multiple chlorophylls. PSII binds additional chlorophylls, carotenoids and specific lipids. serves as cofactor.

Its subcellular location is the plastid. It localises to the chloroplast thylakoid membrane. In terms of biological role, one of the components of the core complex of photosystem II (PSII). It binds chlorophyll and helps catalyze the primary light-induced photochemical processes of PSII. PSII is a light-driven water:plastoquinone oxidoreductase, using light energy to abstract electrons from H(2)O, generating O(2) and a proton gradient subsequently used for ATP formation. This is Photosystem II CP47 reaction center protein from Nandina domestica (Heavenly bamboo).